Here is a 162-residue protein sequence, read N- to C-terminus: Peroxiredoxin-2C (162 aa).

The 159-residue stretch at 4–162 (ITVGDVVPDG…SSAEDILKAL (159 aa)) folds into the Thioredoxin domain. C51 acts as the Cysteine sulfenic acid (-SOH) intermediate in catalysis.

This sequence belongs to the peroxiredoxin family. Prx5 subfamily. As to quaternary structure, monomer. As to expression, highly expressed in buds and flowers. Slightly expressed in green tissues. Also detected in pollen.

Its subcellular location is the cytoplasm. It catalyses the reaction [glutaredoxin]-dithiol + a hydroperoxide = [glutaredoxin]-disulfide + an alcohol + H2O. Its function is as follows. Thiol-specific peroxidase that catalyzes the reduction of hydrogen peroxide and organic hydroperoxides to water and alcohols, respectively. Plays a role in cell protection against oxidative stress by detoxifying peroxides and as sensor of hydrogen peroxide-mediated signaling events. This is Peroxiredoxin-2C (PRXIIC) from Arabidopsis thaliana (Mouse-ear cress).